Here is a 548-residue protein sequence, read N- to C-terminus: Chaperonin GroEL (548 aa).

ATP is bound by residues 30–33 (TLGP), Lys51, 87–91 (DGTTT), Gly415, and Asp496. The segment at 527-548 (SDKEDAMPPMRGGMGGMGGMDF) is disordered. Positions 538–548 (GGMGGMGGMDF) are enriched in gly residues.

It belongs to the chaperonin (HSP60) family. Forms a cylinder of 14 subunits composed of two heptameric rings stacked back-to-back. Interacts with the co-chaperonin GroES.

It localises to the cytoplasm. The catalysed reaction is ATP + H2O + a folded polypeptide = ADP + phosphate + an unfolded polypeptide.. Its function is as follows. Together with its co-chaperonin GroES, plays an essential role in assisting protein folding. The GroEL-GroES system forms a nano-cage that allows encapsulation of the non-native substrate proteins and provides a physical environment optimized to promote and accelerate protein folding. In Rickettsia akari (strain Hartford), this protein is Chaperonin GroEL.